We begin with the raw amino-acid sequence, 499 residues long: Ethanolamine-phosphate phospho-lyase (499 aa).

N6-(pyridoxal phosphate)lysine is present on K278. Residues 468 to 479 (RDSTTDSKENPS) show a composition bias toward basic and acidic residues. A disordered region spans residues 468–499 (RDSTTDSKENPSRKRNGMCTDTHSLLSKRLKT).

This sequence belongs to the class-III pyridoxal-phosphate-dependent aminotransferase family. Homotetramer. Requires pyridoxal 5'-phosphate as cofactor.

Its subcellular location is the mitochondrion. The enzyme catalyses phosphoethanolamine + H2O = acetaldehyde + NH4(+) + phosphate. Catalyzes the pyridoxal-phosphate-dependent breakdown of phosphoethanolamine, converting it to ammonia, inorganic phosphate and acetaldehyde. This is Ethanolamine-phosphate phospho-lyase (ETNPPL) from Homo sapiens (Human).